The primary structure comprises 77 residues: Translation initiation factor IF-1, chloroplastic (77 aa).

Residues 1-71 (MKRQKWIHEG…TRGRIIYRLR (71 aa)) enclose the S1-like domain.

Belongs to the IF-1 family. In terms of assembly, component of the 30S ribosomal translation pre-initiation complex which assembles on the 30S ribosome in the order IF-2 and IF-3, IF-1 and N-formylmethionyl-tRNA(fMet); mRNA recruitment can occur at any time during PIC assembly.

It is found in the plastid. It localises to the chloroplast. Its function is as follows. One of the essential components for the initiation of protein synthesis. Stabilizes the binding of IF-2 and IF-3 on the 30S subunit to which N-formylmethionyl-tRNA(fMet) subsequently binds. Helps modulate mRNA selection, yielding the 30S pre-initiation complex (PIC). Upon addition of the 50S ribosomal subunit IF-1, IF-2 and IF-3 are released leaving the mature 70S translation initiation complex. This is Translation initiation factor IF-1, chloroplastic from Leucophyllum frutescens (Texas ranger).